Here is a 451-residue protein sequence, read N- to C-terminus: UPF0210 protein lmo0534 (451 aa).

The protein belongs to the UPF0210 family. Homodimer.

This is UPF0210 protein lmo0534 from Listeria monocytogenes serovar 1/2a (strain ATCC BAA-679 / EGD-e).